Consider the following 152-residue polypeptide: UPF0178 protein YPTS_2857 (152 aa).

This sequence belongs to the UPF0178 family.

The protein is UPF0178 protein YPTS_2857 of Yersinia pseudotuberculosis serotype IB (strain PB1/+).